A 140-amino-acid polypeptide reads, in one-letter code: Profilin-1 (140 aa).

N-acetylalanine is present on alanine 2. Residue serine 28 is modified to Phosphoserine. A Glycyl lysine isopeptide (Lys-Gly) (interchain with G-Cter in SUMO2); alternate cross-link involves residue lysine 54. Residue lysine 54 forms a Glycyl lysine isopeptide (Lys-Gly) (interchain with G-Cter in ubiquitin); alternate linkage. Phosphoserine is present on serine 57. Lysine 108 carries the post-translational modification N6-acetyllysine. Position 129 is a phosphotyrosine (tyrosine 129). Serine 138 bears the Phosphoserine; by ROCK1 mark.

This sequence belongs to the profilin family. In terms of assembly, found in a complex with XPO6, Ran, ACTB and PFN1. Interacts with ACTB. Interacts with VASP. Interacts with HTT. Interacts with SH3BGRL. Occurs in many kinds of cells as a complex with monomeric actin in a 1:1 ratio. Interacts with ACTMAP. In terms of processing, phosphorylation at Ser-138 reduces its affinity for G-actin and blocks its interaction with HTT, reducing its ability to inhibit androgen receptor (AR) and HTT aggregation.

The protein localises to the cytoplasm. Its subcellular location is the cytoskeleton. Functionally, binds to actin and affects the structure of the cytoskeleton. At high concentrations, profilin prevents the polymerization of actin, whereas it enhances it at low concentrations. By binding to PIP2, it inhibits the formation of IP3 and DG. Inhibits androgen receptor (AR) and HTT aggregation and binding of G-actin is essential for its inhibition of AR. The sequence is that of Profilin-1 (Pfn1) from Mus musculus (Mouse).